We begin with the raw amino-acid sequence, 72 residues long: Hydrophobic protein OSR8 (72 aa).

The next 2 membrane-spanning stretches (helical) occupy residues 9-29 (FLEI…RFGC) and 39-59 (LLTI…LVAL).

It belongs to the UPF0057 (PMP3) family.

Its subcellular location is the membrane. This is Hydrophobic protein OSR8 (OSR8) from Oryza sativa subsp. japonica (Rice).